The primary structure comprises 324 residues: Phosphomevalonate decarboxylase (324 aa).

The protein belongs to the phosphomevalonate decarboxylase family.

The catalysed reaction is (R)-5-phosphomevalonate + ATP = isopentenyl phosphate + ADP + phosphate + CO2. With respect to regulation, is strongly inhibited by 6-fluoromevalonate monophosphate but shows negligible inhibition by 6-fluoromevalonate diphosphate (a potent inhibitor of the classical mevalonate pathway). Its function is as follows. Catalyzes the decarboxylation of mevalonate 5-phosphate (MVAP) to isopentenyl phosphate (IP). Functions in an alternate mevalonate (MVA) pathway leading to isopentenyl diphosphate (IPP), a key precursor for the biosynthesis of isoprenoid compounds such as archaeal membrane lipids. The polypeptide is Phosphomevalonate decarboxylase (mvaD) (Haloferax volcanii (strain ATCC 29605 / DSM 3757 / JCM 8879 / NBRC 14742 / NCIMB 2012 / VKM B-1768 / DS2) (Halobacterium volcanii)).